Here is a 383-residue protein sequence, read N- to C-terminus: UDP-D-xylose:L-fucose alpha-1,3-D-xylosyltransferase 3 (383 aa).

Topologically, residues 1–20 (MAQQSQRPISNRHISLLNRN) are cytoplasmic. The chain crosses the membrane as a helical; Signal-anchor for type II membrane protein span at residues 21–41 (GLILLLLLALFVILGVFLPLT). Over 42–383 (KSSLFMFPNT…KNRGKKHKLP (342 aa)) the chain is Lumenal. Residues Asn-50, Asn-82, and Asn-157 are each glycosylated (N-linked (GlcNAc...) asparagine). The DXD motif motif lies at 180–182 (DVD). N-linked (GlcNAc...) asparagine glycosylation is found at Asn-212, Asn-258, Asn-301, Asn-306, Asn-357, and Asn-364.

The protein belongs to the glycosyltransferase 77 family. Requires Mn(2+) as cofactor. The cofactor is Mg(2+). Glycosylated. Expressed around trichome support cells in the adaxial epidermis of rosette leaves, in cauline leaves, petals and both the proximal and distal ends of siliques.

The protein resides in the golgi apparatus membrane. Its function is as follows. Catalyzes the transfer of D-xylose from UDP-alpha-D-xylose onto L-fucose. Probably involved in the biosynthesis of rhamnogalacturonan II (RG-II) through xylosylation of the internal fucose moiety of the A-chain of RG-II, a structurally complex pectic polysaccharide of the primary cell wall. RG-II is essential for the cell wall integrity of rapidly growing tissues such as roots and pollen tube growth and elongation. In Arabidopsis thaliana (Mouse-ear cress), this protein is UDP-D-xylose:L-fucose alpha-1,3-D-xylosyltransferase 3.